Reading from the N-terminus, the 266-residue chain is Type III pantothenate kinase (266 aa).

11–18 (DIGNTSTV) is an ATP binding site. 111-114 (GADR) contacts substrate. Residue Asp113 is the Proton acceptor of the active site. Asp135 lines the K(+) pocket. An ATP-binding site is contributed by Thr138. Residue Thr190 participates in substrate binding.

It belongs to the type III pantothenate kinase family. Homodimer. The cofactor is NH4(+). K(+) is required as a cofactor.

The protein resides in the cytoplasm. It catalyses the reaction (R)-pantothenate + ATP = (R)-4'-phosphopantothenate + ADP + H(+). Its pathway is cofactor biosynthesis; coenzyme A biosynthesis; CoA from (R)-pantothenate: step 1/5. In terms of biological role, catalyzes the phosphorylation of pantothenate (Pan), the first step in CoA biosynthesis. The polypeptide is Type III pantothenate kinase (Deinococcus geothermalis (strain DSM 11300 / CIP 105573 / AG-3a)).